Reading from the N-terminus, the 284-residue chain is tRNA-cytidine(32) 2-sulfurtransferase (284 aa).

The short motif at 45 to 50 (SGGKDS) is the PP-loop motif element. Residues Cys-120, Cys-123, and Cys-211 each coordinate [4Fe-4S] cluster.

Belongs to the TtcA family. As to quaternary structure, homodimer. Mg(2+) is required as a cofactor. The cofactor is [4Fe-4S] cluster.

The protein localises to the cytoplasm. The catalysed reaction is cytidine(32) in tRNA + S-sulfanyl-L-cysteinyl-[cysteine desulfurase] + AH2 + ATP = 2-thiocytidine(32) in tRNA + L-cysteinyl-[cysteine desulfurase] + A + AMP + diphosphate + H(+). It participates in tRNA modification. Functionally, catalyzes the ATP-dependent 2-thiolation of cytidine in position 32 of tRNA, to form 2-thiocytidine (s(2)C32). The sulfur atoms are provided by the cysteine/cysteine desulfurase (IscS) system. The sequence is that of tRNA-cytidine(32) 2-sulfurtransferase from Alcanivorax borkumensis (strain ATCC 700651 / DSM 11573 / NCIMB 13689 / SK2).